Consider the following 359-residue polypeptide: 4-galactosyl-N-acetylglucosaminide 3-alpha-L-fucosyltransferase 9 (359 aa).

The Cytoplasmic portion of the chain corresponds to 1–11 (MTSASKGILRP). The chain crosses the membrane as a helical; Signal-anchor for type II membrane protein span at residues 12 to 32 (FLIVCIILACSMVCLFIYIKP). Over 33-359 (TNSWIFSPME…VGNLEKWFWN (327 aa)) the chain is Lumenal. The N-linked (GlcNAc...) asparagine glycan is linked to N62. Positions 63–168 (ETTILIWVWP…RRDSDIQVPY (106 aa)) are acceptor-binding. Q75 lines the a beta-D-galactosyl-(1-&gt;4)-N-acetyl-beta-D-glucosaminyl derivative pocket. 3 disulfide bridges follow: C82–C335, C91–C338, and C190–C238. Residue N101 is glycosylated (N-linked (GlcNAc...) asparagine). A beta-D-galactosyl-(1-&gt;4)-N-acetyl-beta-D-glucosaminyl derivative is bound at residue E137. Catalysis depends on E137, which acts as the Nucleophile. E137 is a GDP-beta-L-fucose binding site. A glycan (N-linked (GlcNAc...) asparagine) is linked at N153. 11 residues coordinate GDP-beta-L-fucose: Y168, V192, S194, N195, R202, V226, Y241, N246, Y252, E255, and K256. Residues 169–326 (GFLTVSTNPF…NWRKDFTVNL (158 aa)) form a donor-binding region. Residues 327-359 (PRFWESHACLACDHVKRHQEYKSVGNLEKWFWN) form an acceptor-binding region.

The protein belongs to the glycosyltransferase 10 family. In terms of assembly, homodimer. N-glycosylated with complex-type N-glycans.

The protein resides in the golgi apparatus. It is found in the trans-Golgi network membrane. It localises to the golgi apparatus membrane. The catalysed reaction is a beta-D-galactosyl-(1-&gt;4)-N-acetyl-beta-D-glucosaminyl derivative + GDP-beta-L-fucose = a beta-D-galactosyl-(1-&gt;4)-[alpha-L-fucosyl-(1-&gt;3)]-N-acetyl-beta-D-glucosaminyl derivative + GDP + H(+). It catalyses the reaction an alpha-Neu5Ac-(2-&gt;3)-beta-D-Gal-(1-&gt;4)-beta-D-GlcNAc-(1-&gt;3)-beta-D-Gal-(1-&gt;4)-beta-D-GlcNAc derivative + GDP-beta-L-fucose = an alpha-Neu5Ac-(2-&gt;3)-beta-D-Gal-(1-&gt;4)-beta-D-GlcNAc-(1-&gt;3)-beta-D-Gal-(1-&gt;4)-[alpha-L-Fuc-(1-&gt;3)]-beta-D-GlcNAc derivative + GDP + H(+). It carries out the reaction alpha-N-glycoloylneuraminosyl-(2-&gt;3)-beta-D-galactosyl-(1-&gt;4)-N-acetyl-beta-D-glucosaminyl-(1-&gt;3)-beta-D-galactosyl-(1-&gt;4)-N-acetyl-beta-D-glucosaminyl-(1-&gt;3)-beta-D-galactosyl-(1-&gt;4)-beta-D-glucosyl-(1&lt;-&gt;1')-ceramide + GDP-beta-L-fucose = alpha-N-glycoloylneuraminosyl-(2-&gt;3)-beta-D-galactosyl-(1-&gt;4)-N-acetyl-beta-D-glucosaminyl-(1-&gt;3)-beta-D-galactosyl-(1-&gt;4)-[alpha-L-fucosyl-(1-&gt;3)]-N-acetyl-beta-D-glucosaminyl-(1-&gt;3)-beta-D-galactosyl-(1-&gt;4)-beta-D-glucosyl-(1&lt;-&gt;1')-ceramide + GDP + H(+). The enzyme catalyses alpha-D-galactosyl-(1-&gt;3)-beta-D-galactosyl-(1-&gt;4)-N-acetyl-beta-D-glucosaminyl-(1-&gt;3)-beta-D-galactosyl-(1-&gt;4)-beta-D-glucosyl-(1&lt;-&gt;1')-ceramide + GDP-beta-L-fucose = a neolactoside IV(3)-alpha-Gal,III(3)-alpha-Fuc-nLc4Cer + GDP + H(+). The catalysed reaction is a neolactoside nLc4Cer + GDP-beta-L-fucose = a neolactoside III(3)-alpha-Fuc-nLc4Cer + GDP + H(+). It catalyses the reaction an N-acetyl-alpha-neuraminyl-(2-&gt;3)-beta-D-galactosyl-(1-&gt;4)-N-acetyl-beta-D-glucosaminyl derivative + GDP-beta-L-fucose = an alpha-Neu5Ac-(2-&gt;3)-beta-D-Gal-(1-&gt;4)-[alpha-L-Fuc-(1-&gt;3)]-beta-D-GlcNAc derivative + GDP + H(+). It carries out the reaction beta-D-Gal-(1-&gt;4)-beta-D-GlcNAc-(1-&gt;3)-beta-D-Gal-(1-&gt;4)-D-Glc + GDP-beta-L-fucose = beta-D-Gal-(1-&gt;4)-[alpha-L-Fuc-(1-&gt;3)]-beta-D-GlcNAc-(1-&gt;3)-beta-D-Gal-(1-&gt;4)-D-Glc + GDP + H(+). The enzyme catalyses an alpha-L-Fuc-(1-&gt;2)-beta-D-Gal-(1-&gt;4)-beta-D-GlcNAc derivative + GDP-beta-L-fucose = an alpha-L-Fuc-(1-&gt;2)-beta-D-Gal-(1-&gt;4)-[alpha-L-Fuc-(1-&gt;3)]-beta-D-GlcNAc derivative + GDP + H(+). It functions in the pathway protein modification; protein glycosylation. The protein operates within glycolipid biosynthesis. With respect to regulation, activated by Mn2+. In terms of biological role, catalyzes alpha(1-&gt;3) linkage of fucosyl moiety transferred from GDP-beta-L-fucose to N-acetyl glucosamine (GlcNAc) within type 2 lactosamine (LacNAc, beta-D-Gal-(1-&gt;4)-beta-D-GlcNAc-) glycan attached to glycolipids and N- or O-linked glycoproteins. Fucosylates distal type 2 LacNAc and its fucosylated (H-type 2 LacNAc) and sialylated (sialyl-type 2 LacNAc) derivatives to form Lewis x (Lex) (CD15) and Lewis y (Ley) antigenic epitopes involved in cell adhesion and differentiation. Generates Lex epitopes in the brain, presumably playing a role in the maintenance of neuronal stemness and neurite outgrowth in progenitor neural cells. Fucosylates the internal type 2 LacNAc unit of the polylactosamine chain to form VIM-2 antigen that serves as recognition epitope for SELE. Can also modify milk oligosaccharides in particular type 2 tetrasaccharide LNnT. This Bos taurus (Bovine) protein is 4-galactosyl-N-acetylglucosaminide 3-alpha-L-fucosyltransferase 9.